The following is a 200-amino-acid chain: dITP/XTP pyrophosphatase (200 aa).

A substrate-binding site is contributed by 7–12 (TQNKRK). Mg(2+) is bound by residues E42 and D71. D71 (proton acceptor) is an active-site residue. Substrate contacts are provided by residues S72, 156–159 (FGYD), K179, and 184–185 (HR).

Belongs to the HAM1 NTPase family. As to quaternary structure, homodimer. Requires Mg(2+) as cofactor.

The catalysed reaction is XTP + H2O = XMP + diphosphate + H(+). It carries out the reaction dITP + H2O = dIMP + diphosphate + H(+). The enzyme catalyses ITP + H2O = IMP + diphosphate + H(+). Functionally, pyrophosphatase that catalyzes the hydrolysis of nucleoside triphosphates to their monophosphate derivatives, with a high preference for the non-canonical purine nucleotides XTP (xanthosine triphosphate), dITP (deoxyinosine triphosphate) and ITP. Seems to function as a house-cleaning enzyme that removes non-canonical purine nucleotides from the nucleotide pool, thus preventing their incorporation into DNA/RNA and avoiding chromosomal lesions. The chain is dITP/XTP pyrophosphatase from Malacoplasma penetrans (strain HF-2) (Mycoplasma penetrans).